The primary structure comprises 135 residues: MNVEVGEECIRFAKVIRYFTLAGLILLVVSSAMYLLDIDPFVEPDRVVETWHLPASEFWKVNVGKEMESYSEFLYIAHPDNVAVFSLFFLALAPVFALLSILPKMKGIYRILTILVVAELLFGAVRPLILGAIGE.

Helical transmembrane passes span 13-35 (AKVI…AMYL), 82-101 (VAVF…LLSI), and 108-130 (IYRI…PLIL).

Its subcellular location is the cell membrane. This is an uncharacterized protein from Archaeoglobus fulgidus (strain ATCC 49558 / DSM 4304 / JCM 9628 / NBRC 100126 / VC-16).